A 626-amino-acid polypeptide reads, in one-letter code: DNA mismatch repair protein MutL (626 aa).

Belongs to the DNA mismatch repair MutL/HexB family.

Its function is as follows. This protein is involved in the repair of mismatches in DNA. It is required for dam-dependent methyl-directed DNA mismatch repair. May act as a 'molecular matchmaker', a protein that promotes the formation of a stable complex between two or more DNA-binding proteins in an ATP-dependent manner without itself being part of a final effector complex. The sequence is that of DNA mismatch repair protein MutL from Cellvibrio japonicus (strain Ueda107) (Pseudomonas fluorescens subsp. cellulosa).